Consider the following 601-residue polypeptide: MPFKAFDTFKEKILKPGKEGVKNAVGDSLGILQRKIDGTNEEEDAIELNEEGRPVQTSRAHRPVCDCSCCGIPKRYICDCSCCGIPKRYIIAVMSGLGFCISFGIRCNLGVAIVEMVNNSTVYVDGKPEIQTAQFNWDPETVGLIHGSFFWGYIVTQIPGGFISNKFAASRVFGAAIFLTSTLNMFIPSAARVHYGCVMGVRILQGLVEGVTYPACHGMWSKWAPPLERSRLATTSFCGSYAGAVVAMPLAGVLVQYIGWASVFYIYGMFGIIWYMFWLLQAYECPAAHPTISNAERTYIETSIGEGANLASLSKFNTPWRRFFTSLPVYAIIVANFCRSWTFYLLLISQPAYFEEVFGFAISKVGLLSAVPHMVMTIVVPIGGQLADYLRSRKILTTTAVRKIMNCGGFGMEATLLLVVGFSHTKGVAISFLVLAVGFSGFAISGFNVNHLDIAPRYASILMGISNGVGTLSGMVCPLIVGAMTKHKTREEWQNVFLIAALVHYSGVIFYGVFASGEKQDWADPENLSEDKCGIIDQDELAEETELNHETFVSPRKKMSYGATTQNCEVQKTEWRQQRESAFDGEEPLSYQAEGDFSETS.

Residues 1 to 89 (MPFKAFDTFK…CSCCGIPKRY (89 aa)) are Cytoplasmic-facing. A helical membrane pass occupies residues 90 to 110 (IIAVMSGLGFCISFGIRCNLG). The Vesicular portion of the chain corresponds to 111 to 143 (VAIVEMVNNSTVYVDGKPEIQTAQFNWDPETVG). Asn119 is a glycosylation site (N-linked (GlcNAc...) asparagine). The helical transmembrane segment at 144 to 164 (LIHGSFFWGYIVTQIPGGFIS) threads the bilayer. The Cytoplasmic segment spans residues 165-166 (NK). The chain crosses the membrane as a helical span at residues 167 to 187 (FAASRVFGAAIFLTSTLNMFI). Topologically, residues 188-195 (PSAARVHY) are vesicular. Residues 196–216 (GCVMGVRILQGLVEGVTYPAC) form a helical membrane-spanning segment. The Cytoplasmic segment spans residues 217–234 (HGMWSKWAPPLERSRLAT). The helical transmembrane segment at 235-255 (TSFCGSYAGAVVAMPLAGVLV) threads the bilayer. The Vesicular portion of the chain corresponds to 256 to 262 (QYIGWAS). A helical membrane pass occupies residues 263–283 (VFYIYGMFGIIWYMFWLLQAY). Residues 284–327 (ECPAAHPTISNAERTYIETSIGEGANLASLSKFNTPWRRFFTSL) are Cytoplasmic-facing. A helical membrane pass occupies residues 328 to 348 (PVYAIIVANFCRSWTFYLLLI). At 349–366 (SQPAYFEEVFGFAISKVG) the chain is on the vesicular side. A helical membrane pass occupies residues 367 to 387 (LLSAVPHMVMTIVVPIGGQLA). The Cytoplasmic portion of the chain corresponds to 388–403 (DYLRSRKILTTTAVRK). The chain crosses the membrane as a helical span at residues 404-424 (IMNCGGFGMEATLLLVVGFSH). Residues 425-426 (TK) are Vesicular-facing. Residues 427-447 (GVAISFLVLAVGFSGFAISGF) traverse the membrane as a helical segment. Over 448-460 (NVNHLDIAPRYAS) the chain is Cytoplasmic. Residues 461 to 481 (ILMGISNGVGTLSGMVCPLIV) form a helical membrane-spanning segment. At 482 to 494 (GAMTKHKTREEWQ) the chain is on the vesicular side. The chain crosses the membrane as a helical span at residues 495–515 (NVFLIAALVHYSGVIFYGVFA). The Cytoplasmic segment spans residues 516-598 (SGEKQDWADP…LSYQAEGDFS (83 aa)). A disordered region spans residues 576–601 (RQQRESAFDGEEPLSYQAEGDFSETS).

This sequence belongs to the major facilitator superfamily. Sodium/anion cotransporter family. VGLUT subfamily. Expressed in restricted areas of the brain. Highest expression is found in the neurons of the basal forebrain, the hippocampal formation, and the majority of the neurons of the mesencephalic raphe nuclei. Expressed in inner hair cells of the ear.

It is found in the cytoplasmic vesicle. The protein localises to the secretory vesicle. Its subcellular location is the synaptic vesicle membrane. It localises to the cell membrane. The protein resides in the synapse. It is found in the synaptosome. It carries out the reaction L-glutamate(out) = L-glutamate(in). The catalysed reaction is 3 Na(+)(out) + phosphate(out) = 3 Na(+)(in) + phosphate(in). The enzyme catalyses chloride(in) = chloride(out). Its activity is regulated as follows. The L-glutamate uniporter activity exhibits a biphasic dependence on chloride concentration. Chloride channel activity is allosterically activated by lumenal H(+) and Cl(-) leading to synaptic vesicles acidification. The L-glutamate transport activity is allosterically activated by lumenal H(+) and Cl(-), preventing non-vesicular L-glutamate release. In terms of biological role, multifunctional transporter that transports L-glutamate as well as multiple ions such as chloride, sodium and phosphate. At the synaptic vesicle membrane, mainly functions as an uniporter that mediates the uptake of L-glutamate into synaptic vesicles at presynaptic nerve terminals of excitatory neural cells. The L-glutamate uniporter activity is electrogenic and is driven by the proton electrochemical gradient, mainly by the electrical gradient established by the vacuolar H(+)-ATPase across the synaptic vesicle membrane. In addition, functions as a chloride channel that allows a chloride permeation through the synaptic vesicle membrane that affects the proton electrochemical gradient and promotes synaptic vesicles acidification. At the plasma membrane, following exocytosis, functions as a symporter of Na(+) and phosphate from the extracellular space to the cytoplasm allowing synaptic phosphate homeostasis regulation. The symporter activity is electrogenic. Moreover, operates synergistically with SLC18A3/VACHT under a constant H(+) gradient, thereby allowing striatal vesicular acetylcholine uptake. This is Vesicular glutamate transporter 3 from Mus musculus (Mouse).